A 436-amino-acid polypeptide reads, in one-letter code: Histidine--tRNA ligase 1 (436 aa).

This sequence belongs to the class-II aminoacyl-tRNA synthetase family. As to quaternary structure, homodimer.

The protein resides in the cytoplasm. The enzyme catalyses tRNA(His) + L-histidine + ATP = L-histidyl-tRNA(His) + AMP + diphosphate + H(+). The protein is Histidine--tRNA ligase 1 of Bacillus cereus (strain ATCC 10987 / NRS 248).